Reading from the N-terminus, the 636-residue chain is Sodium-dependent nutrient amino acid transporter 1 (636 aa).

Positions 1–40 (MELKTMPQNGANNGNPQGNTSNNNNTNDSSNSNSNNNNKT) are disordered. Over 1-50 (MELKTMPQNGANNGNPQGNTSNNNNTNDSSNSNSNNNNKTERTNWSNGLE) the chain is Cytoplasmic. Over residues 7 to 40 (PQNGANNGNPQGNTSNNNNTNDSSNSNSNNNNKT) the composition is skewed to low complexity. The next 3 helical transmembrane spans lie at 51–71 (FLMS…FPFT), 78–98 (GAFL…MYYL), and 131–151 (TICI…YLAV). An N-linked (GlcNAc...) asparagine glycan is attached at Asn184. Helical transmembrane passes span 225–245 (PDWK…LVIM), 254–274 (AAYF…GRAV), 303–323 (AVVQ…MFSS), 337–357 (IVTT…FAIL), 397–417 (LFSA…IVAL), 436–456 (VALV…TPGG), 469–489 (TYVV…IYGV), 511–531 (CWLI…MVTI), and 547–567 (VAGW…GWWY).

It belongs to the sodium:neurotransmitter symporter (SNF) (TC 2.A.22) family.

It is found in the membrane. Unusual broad substrate spectrum amino acid:sodium cotransporter that promotes absorption of the D isomers of essential amino acids. Neutral amino acids are the preferred substrates, especially methionine and phenylalanine. The sequence is that of Sodium-dependent nutrient amino acid transporter 1 from Drosophila grimshawi (Hawaiian fruit fly).